The primary structure comprises 331 residues: Biotin synthase (331 aa).

Residues 48 to 278 form the Radical SAM core domain; it reads FDSQKFEFCS…SAELRLCGGR (231 aa). 3 residues coordinate [4Fe-4S] cluster: cysteine 66, cysteine 70, and cysteine 73. The [2Fe-2S] cluster site is built by cysteine 110, cysteine 143, cysteine 203, and arginine 273.

Belongs to the radical SAM superfamily. Biotin synthase family. Homodimer. The cofactor is [4Fe-4S] cluster. Requires [2Fe-2S] cluster as cofactor.

The enzyme catalyses (4R,5S)-dethiobiotin + (sulfur carrier)-SH + 2 reduced [2Fe-2S]-[ferredoxin] + 2 S-adenosyl-L-methionine = (sulfur carrier)-H + biotin + 2 5'-deoxyadenosine + 2 L-methionine + 2 oxidized [2Fe-2S]-[ferredoxin]. It functions in the pathway cofactor biosynthesis; biotin biosynthesis; biotin from 7,8-diaminononanoate: step 2/2. Catalyzes the conversion of dethiobiotin (DTB) to biotin by the insertion of a sulfur atom into dethiobiotin via a radical-based mechanism. In Hydrogenobaculum sp. (strain Y04AAS1), this protein is Biotin synthase.